Here is a 524-residue protein sequence, read N- to C-terminus: Probable cytochrome P450 519C1 (524 aa).

The chain crosses the membrane as a helical span at residues 1–21 (MNILLLIFYFLVCFLIFDFIK). C470 contributes to the heme binding site.

Belongs to the cytochrome P450 family. Heme is required as a cofactor.

The protein resides in the membrane. The polypeptide is Probable cytochrome P450 519C1 (cyp519C1) (Dictyostelium discoideum (Social amoeba)).